The sequence spans 271 residues: Zinc finger CCHC domain-containing protein 9 (271 aa).

A disordered region spans residues 1–67; the sequence is MTRWARVTTS…RKKNKKKKEY (67 aa). The segment covering 7-20 has biased composition (polar residues); that stretch reads VTTSNSKRPLSATS. Positions 22–33 are enriched in basic and acidic residues; sequence EDMKKGSVERAD. Over residues 35 to 46 the composition is skewed to polar residues; sequence SLPNRKQCQSSR. Positions 56-65 are enriched in basic residues; it reads AKRKKNKKKK. 4 consecutive CCHC-type zinc fingers follow at residues 128–145, 155–172, 184–201, and 211–228; these read MVCFHCRQPGHGIADCPA, GICYRCGSTEHEMSKCRA, AKCFVCGEMGHLSRSCPD, and GSCKLCGSVEHFKKDCRE.

In terms of tissue distribution, detected in brain cortex and in testis.

It is found in the nucleus. The protein resides in the nucleolus. May down-regulate transcription mediated by NF-kappa-B and the serum response element. The polypeptide is Zinc finger CCHC domain-containing protein 9 (Zcchc9) (Mus musculus (Mouse)).